A 478-amino-acid chain; its full sequence is Proline--tRNA ligase (478 aa).

This sequence belongs to the class-II aminoacyl-tRNA synthetase family. ProS type 3 subfamily. As to quaternary structure, homodimer.

It localises to the cytoplasm. The enzyme catalyses tRNA(Pro) + L-proline + ATP = L-prolyl-tRNA(Pro) + AMP + diphosphate. In terms of biological role, catalyzes the attachment of proline to tRNA(Pro) in a two-step reaction: proline is first activated by ATP to form Pro-AMP and then transferred to the acceptor end of tRNA(Pro). The sequence is that of Proline--tRNA ligase from Ignicoccus hospitalis (strain KIN4/I / DSM 18386 / JCM 14125).